We begin with the raw amino-acid sequence, 570 residues long: Keratin, type I cytoskeletal 10 (570 aa).

Over residues 1 to 16 (MSVLYSSSSKQFSSSR) the composition is skewed to low complexity. The segment at 1 to 29 (MSVLYSSSSKQFSSSRSGGGGGGGSVRVS) is disordered. The tract at residues 1–143 (MSVLYSSSSK…GDGGSLLSGN (143 aa)) is head. A phosphoserine mark is found at serine 15 and serine 17. Arginine 32 carries the post-translational modification Asymmetric dimethylarginine; alternate. Omega-N-methylarginine; alternate is present on arginine 32. 4 positions are modified to phosphoserine: serine 34, serine 45, serine 48, and serine 168. A coil 1A region spans residues 144–179 (GRVTMQNLNDRLASYMDKVRALEESNYELEGKIKEW). The 315-residue stretch at 144-458 (GRVTMQNLND…SLLEGEGSSS (315 aa)) folds into the IF rod domain. The segment at 180 to 200 (YEKHGNSSQREPRDYSKYYKT) is linker 1. The coil 1B stretch occupies residues 201-292 (IEDLKGQILT…KNHEEEMRDL (92 aa)). The interval 293 to 315 (QNVSTGDVNVEMNAAPGVDLTQL) is linker 12. The interval 316–454 (LNNMRNQYEQ…QTYRSLLEGE (139 aa)) is coil 2. Residues 451–570 (LEGEGSSSGG…GDQSSKGPRY (120 aa)) form a disordered region. The segment at 455–570 (GSSSGGGGGR…GDQSSKGPRY (116 aa)) is tail. A compositionally biased stretch (gly residues) spans 456-562 (SSSGGGGGRR…GGFKSSGGGD (107 aa)).

Belongs to the intermediate filament family. As to quaternary structure, (Microbial infection) Interacts (via C-terminal tail domain) with the S.aureus clumping factor, clfB; this interaction probably mediates S.aureus attachment to the highly keratinized squamous epithelial cells from the nasal cavity. In terms of assembly, heterotetramer of two type I and two type II keratins. Heterodimer with KRT1. Two heterodimers of KRT1 and KRT10 form a heterotetramer. The KRT10 subunit in the heterotetramer is probably disulfide-linked. Interacts with PLEC isoform 1C, when in a heterodimer with KRT1. (Microbial infection) Interacts (via the C-terminal tail domain) with S.pneumoniae serine-rich repeat protein PsrP; this interaction probably mediates S.pneumoniae adherence to lung tissue and subsequent pathogenesis. As to expression, expressed in the suprabasal layers of the epidermis throughout the entire sole (at protein level). Expressed in the infundibular regions of the ear, the interscale regions of the tail, and the interfollicular epidermis of the back. Expressed in lung tissue from young mice (at protein level).

The protein localises to the secreted. The protein resides in the extracellular space. Its subcellular location is the cell surface. It is found in the cytoplasm. Its function is as follows. Plays a role in the establishment of the epidermal barrier on plantar skin. Involved in the maintenance of cell layer development and keratin filament bundles in suprabasal cells of the epithelium. Functionally, (Microbial infection) Acts as a mediator of S.aureus adherence to desquamated nasal epithelial cells via clfB, and hence may play a role in nasal colonization. In terms of biological role, (Microbial infection) Binds S.pneumoniae PsrP, mediating adherence of the bacteria to lung cell lines. The polypeptide is Keratin, type I cytoskeletal 10 (Krt10) (Mus musculus (Mouse)).